Here is a 238-residue protein sequence, read N- to C-terminus: 1-(5-phosphoribosyl)-5-[(5-phosphoribosylamino)methylideneamino] imidazole-4-carboxamide isomerase (238 aa).

Catalysis depends on aspartate 8, which acts as the Proton acceptor. The active-site Proton donor is the aspartate 129.

This sequence belongs to the HisA/HisF family.

The protein resides in the cytoplasm. It carries out the reaction 1-(5-phospho-beta-D-ribosyl)-5-[(5-phospho-beta-D-ribosylamino)methylideneamino]imidazole-4-carboxamide = 5-[(5-phospho-1-deoxy-D-ribulos-1-ylimino)methylamino]-1-(5-phospho-beta-D-ribosyl)imidazole-4-carboxamide. The protein operates within amino-acid biosynthesis; L-histidine biosynthesis; L-histidine from 5-phospho-alpha-D-ribose 1-diphosphate: step 4/9. This is 1-(5-phosphoribosyl)-5-[(5-phosphoribosylamino)methylideneamino] imidazole-4-carboxamide isomerase from Clostridium novyi (strain NT).